The primary structure comprises 431 residues: Glutamate-1-semialdehyde 2,1-aminomutase (431 aa).

At Lys-269 the chain carries N6-(pyridoxal phosphate)lysine.

This sequence belongs to the class-III pyridoxal-phosphate-dependent aminotransferase family. HemL subfamily. Homodimer. Pyridoxal 5'-phosphate is required as a cofactor.

The protein resides in the cytoplasm. It carries out the reaction (S)-4-amino-5-oxopentanoate = 5-aminolevulinate. It participates in porphyrin-containing compound metabolism; protoporphyrin-IX biosynthesis; 5-aminolevulinate from L-glutamyl-tRNA(Glu): step 2/2. Its pathway is porphyrin-containing compound metabolism; chlorophyll biosynthesis. The polypeptide is Glutamate-1-semialdehyde 2,1-aminomutase (Chlorobium phaeobacteroides (strain BS1)).